The chain runs to 396 residues: Tryptophan synthase beta chain (396 aa).

The residue at position 88 (lysine 88) is an N6-(pyridoxal phosphate)lysine.

The protein belongs to the TrpB family. As to quaternary structure, tetramer of two alpha and two beta chains. Pyridoxal 5'-phosphate serves as cofactor.

The enzyme catalyses (1S,2R)-1-C-(indol-3-yl)glycerol 3-phosphate + L-serine = D-glyceraldehyde 3-phosphate + L-tryptophan + H2O. It functions in the pathway amino-acid biosynthesis; L-tryptophan biosynthesis; L-tryptophan from chorismate: step 5/5. The beta subunit is responsible for the synthesis of L-tryptophan from indole and L-serine. The protein is Tryptophan synthase beta chain of Shewanella baltica (strain OS185).